The primary structure comprises 200 residues: UPF0488 protein CG14286 (200 aa).

Disordered regions lie at residues M1 to E28 and K139 to G174.

The protein belongs to the UPF0488 family.

In Drosophila melanogaster (Fruit fly), this protein is UPF0488 protein CG14286.